The primary structure comprises 670 residues: DNA ligase (670 aa).

NAD(+)-binding positions include 36–40 (DEEYD), 84–85 (SL), and Glu116. The active-site N6-AMP-lysine intermediate is Lys118. Residues Arg139, Glu177, Lys293, and Lys317 each coordinate NAD(+). Zn(2+) contacts are provided by Cys411, Cys414, Cys429, and Cys434. A BRCT domain is found at 594-670 (KKPSPLKGLT…SYEEFLKMLE (77 aa)).

Belongs to the NAD-dependent DNA ligase family. LigA subfamily. Requires Mg(2+) as cofactor. Mn(2+) is required as a cofactor.

It catalyses the reaction NAD(+) + (deoxyribonucleotide)n-3'-hydroxyl + 5'-phospho-(deoxyribonucleotide)m = (deoxyribonucleotide)n+m + AMP + beta-nicotinamide D-nucleotide.. Functionally, DNA ligase that catalyzes the formation of phosphodiester linkages between 5'-phosphoryl and 3'-hydroxyl groups in double-stranded DNA using NAD as a coenzyme and as the energy source for the reaction. It is essential for DNA replication and repair of damaged DNA. This is DNA ligase from Thermodesulfovibrio yellowstonii (strain ATCC 51303 / DSM 11347 / YP87).